The sequence spans 395 residues: Elongation factor Tu (395 aa).

The 196-residue stretch at 10 to 205 (KPHCNIGTIG…AVDSYIPQPE (196 aa)) folds into the tr-type G domain. Residues 19-26 (GHVDHGKT) form a G1 region. GTP is bound at residue 19 to 26 (GHVDHGKT). Residue Thr26 coordinates Mg(2+). The tract at residues 60 to 64 (GITIA) is G2. The G3 stretch occupies residues 81-84 (DCPG). GTP is bound by residues 81–85 (DCPGH) and 136–139 (NKMD). The G4 stretch occupies residues 136–139 (NKMD). The segment at 173–175 (SAL) is G5.

It belongs to the TRAFAC class translation factor GTPase superfamily. Classic translation factor GTPase family. EF-Tu/EF-1A subfamily. In terms of assembly, monomer.

Its subcellular location is the cytoplasm. The enzyme catalyses GTP + H2O = GDP + phosphate + H(+). Its function is as follows. GTP hydrolase that promotes the GTP-dependent binding of aminoacyl-tRNA to the A-site of ribosomes during protein biosynthesis. The chain is Elongation factor Tu from Acidiphilium cryptum (strain JF-5).